A 2314-amino-acid chain; its full sequence is A-kinase anchor protein 6 (2314 aa).

The span at 1-12 (MLTMSVTLSPLR) shows a compositional bias: polar residues. Disordered regions lie at residues 1-25 (MLTM…DASP), 285-432 (PSSC…DPPD), 505-613 (SLCR…PCHA), and 736-755 (TDEK…HSAT). Residues 301–311 (SDDHKGEHGED) show a composition bias toward basic and acidic residues. The span at 319–330 (QLDSTVGMSSLD) shows a compositional bias: polar residues. Residues 398–420 (ETQKNERKGSDRKGQVVDLKPEL) show a composition bias toward basic and acidic residues. Low complexity predominate over residues 569-592 (SKASSSPPCSHSSESSLGSDSIKS). Residues 736–753 (TDEKSERPSSSEKNESHS) are compositionally biased toward basic and acidic residues. Spectrin repeat units lie at residues 768-847 (QHQE…QLLE) and 1033-1148 (ILEK…LLDD). Ser-1072 is modified (phosphoserine). The tract at residues 1349–1401 (CHSGDLSQNSGSESGIVSEGDNEMPTNSDMSLFSMVDGSPSNPETEHPDPQMG) is disordered. Over residues 1353-1363 (DLSQNSGSESG) the composition is skewed to polar residues. Residues Ser-1568 and Ser-1593 each carry the phosphoserine modification. Basic and acidic residues-rich tracts occupy residues 1816-1831 (RSGV…DGGG) and 1874-1891 (GENK…HVAD). 3 disordered regions span residues 1816 to 1838 (RSGV…ANPS), 1854 to 1926 (LSEN…KTIS), and 1940 to 2012 (SEDS…SGAR). The span at 1917 to 1926 (NLASNVKTIS) shows a compositional bias: polar residues. Over residues 1944–1958 (SVARKEFCPPNDRHP) the composition is skewed to basic and acidic residues. Residues 2062 to 2075 (IIDMASTALKSKSQ) form a PKA-RII subunit binding domain region. The segment at 2166–2286 (EEAGLPGALP…NAKQPKGKVA (121 aa)) is disordered. Positions 2215 to 2226 (GADDAKEGDDVS) are enriched in basic and acidic residues. Polar residues predominate over residues 2227–2243 (HTSQGCAESTEPTTPSG).

Interacts with RII subunit of PKA, phosphatase 2B (calcineurin) and AKAP79. Interacts with SYNPO2.

It localises to the sarcoplasmic reticulum. The protein localises to the nucleus membrane. Functionally, binds to type II regulatory subunits of protein kinase A and anchors/targets them to the nuclear membrane or sarcoplasmic reticulum. May act as an adapter for assembling multiprotein complexes. The sequence is that of A-kinase anchor protein 6 (Akap6) from Rattus norvegicus (Rat).